We begin with the raw amino-acid sequence, 693 residues long: DNA ligase (693 aa).

Residues 43 to 47 (DEEYD), 92 to 93 (SL), and Glu123 contribute to the NAD(+) site. Residue Lys125 is the N6-AMP-lysine intermediate of the active site. NAD(+)-binding residues include Arg146, Glu180, Lys296, and Lys320. Cys414, Cys417, Cys433, and Cys438 together coordinate Zn(2+). The BRCT domain occupies 595–684 (VKYDVLKGLT…AKLKGYNFDE (90 aa)).

Belongs to the NAD-dependent DNA ligase family. LigA subfamily. Mg(2+) is required as a cofactor. It depends on Mn(2+) as a cofactor.

The enzyme catalyses NAD(+) + (deoxyribonucleotide)n-3'-hydroxyl + 5'-phospho-(deoxyribonucleotide)m = (deoxyribonucleotide)n+m + AMP + beta-nicotinamide D-nucleotide.. Functionally, DNA ligase that catalyzes the formation of phosphodiester linkages between 5'-phosphoryl and 3'-hydroxyl groups in double-stranded DNA using NAD as a coenzyme and as the energy source for the reaction. It is essential for DNA replication and repair of damaged DNA. This is DNA ligase from Thermotoga neapolitana (strain ATCC 49049 / DSM 4359 / NBRC 107923 / NS-E).